Reading from the N-terminus, the 269-residue chain is Regulatory protein RecX (269 aa).

Belongs to the RecX family.

The protein resides in the cytoplasm. Functionally, modulates RecA activity. The sequence is that of Regulatory protein RecX from Lactococcus lactis subsp. cremoris (strain SK11).